Consider the following 423-residue polypeptide: Histidine--tRNA ligase (423 aa).

It belongs to the class-II aminoacyl-tRNA synthetase family. In terms of assembly, homodimer.

Its subcellular location is the cytoplasm. It catalyses the reaction tRNA(His) + L-histidine + ATP = L-histidyl-tRNA(His) + AMP + diphosphate + H(+). This is Histidine--tRNA ligase from Corynebacterium diphtheriae (strain ATCC 700971 / NCTC 13129 / Biotype gravis).